The primary structure comprises 208 residues: Outer-membrane lipoprotein carrier protein (208 aa).

The first 21 residues, 1–21, serve as a signal peptide directing secretion; that stretch reads MRLIRTLFVAALAMGASLAHA.

The protein belongs to the LolA family. In terms of assembly, monomer.

Its subcellular location is the periplasm. Its function is as follows. Participates in the translocation of lipoproteins from the inner membrane to the outer membrane. Only forms a complex with a lipoprotein if the residue after the N-terminal Cys is not an aspartate (The Asp acts as a targeting signal to indicate that the lipoprotein should stay in the inner membrane). This is Outer-membrane lipoprotein carrier protein from Pseudomonas aeruginosa (strain UCBPP-PA14).